The chain runs to 308 residues: Transaldolase (308 aa).

Lysine 125 (schiff-base intermediate with substrate) is an active-site residue.

Belongs to the transaldolase family. Type 1 subfamily. Homodimer.

Its subcellular location is the cytoplasm. It catalyses the reaction D-sedoheptulose 7-phosphate + D-glyceraldehyde 3-phosphate = D-erythrose 4-phosphate + beta-D-fructose 6-phosphate. It functions in the pathway carbohydrate degradation; pentose phosphate pathway; D-glyceraldehyde 3-phosphate and beta-D-fructose 6-phosphate from D-ribose 5-phosphate and D-xylulose 5-phosphate (non-oxidative stage): step 2/3. Transaldolase is important for the balance of metabolites in the pentose-phosphate pathway. The protein is Transaldolase of Pseudomonas putida (strain ATCC 47054 / DSM 6125 / CFBP 8728 / NCIMB 11950 / KT2440).